Reading from the N-terminus, the 158-residue chain is Putative ribosomal RNA large subunit methyltransferase H (158 aa).

S-adenosyl-L-methionine-binding positions include Leu-76, Gly-107, and 126 to 131 (LSRMTF).

Belongs to the RNA methyltransferase RlmH family.

Its subcellular location is the cytoplasm. It catalyses the reaction pseudouridine(1915) in 23S rRNA + S-adenosyl-L-methionine = N(3)-methylpseudouridine(1915) in 23S rRNA + S-adenosyl-L-homocysteine + H(+). In terms of biological role, specifically methylates the pseudouridine at position 1915 (m3Psi1915) in 23S rRNA. The sequence is that of Putative ribosomal RNA large subunit methyltransferase H from Methanocorpusculum labreanum (strain ATCC 43576 / DSM 4855 / Z).